The following is a 146-amino-acid chain: MPRPTTSSPSQRMLRVAEQVRHALSETLQRGEIIDPLIENTVVSVSEVRMSPDLRVATAFVSPLGAKDTDAVVEALNKHAKFVRGRVSGALRQMKFMPEFRFKLDTSFDNFARINDLLKSPEVARDLDADDDKTKDDRAKDDKDSE.

The disordered stretch occupies residues 125-146 (RDLDADDDKTKDDRAKDDKDSE).

This sequence belongs to the RbfA family. As to quaternary structure, monomer. Binds 30S ribosomal subunits, but not 50S ribosomal subunits or 70S ribosomes.

It localises to the cytoplasm. In terms of biological role, one of several proteins that assist in the late maturation steps of the functional core of the 30S ribosomal subunit. Associates with free 30S ribosomal subunits (but not with 30S subunits that are part of 70S ribosomes or polysomes). Required for efficient processing of 16S rRNA. May interact with the 5'-terminal helix region of 16S rRNA. The protein is Ribosome-binding factor A of Mesorhizobium japonicum (strain LMG 29417 / CECT 9101 / MAFF 303099) (Mesorhizobium loti (strain MAFF 303099)).